Here is a 423-residue protein sequence, read N- to C-terminus: Histidine--tRNA ligase (423 aa).

The protein belongs to the class-II aminoacyl-tRNA synthetase family. In terms of assembly, homodimer.

The protein resides in the cytoplasm. The enzyme catalyses tRNA(His) + L-histidine + ATP = L-histidyl-tRNA(His) + AMP + diphosphate + H(+). This is Histidine--tRNA ligase from Moorella thermoacetica (strain ATCC 39073 / JCM 9320).